The primary structure comprises 177 residues: Ribosome maturation factor RimM (177 aa).

The PRC barrel domain occupies 92–166 (EDTFYHADLM…RIVVVPDTNP (75 aa)).

Belongs to the RimM family. In terms of assembly, binds ribosomal protein uS19.

The protein localises to the cytoplasm. In terms of biological role, an accessory protein needed during the final step in the assembly of 30S ribosomal subunit, possibly for assembly of the head region. Essential for efficient processing of 16S rRNA. May be needed both before and after RbfA during the maturation of 16S rRNA. It has affinity for free ribosomal 30S subunits but not for 70S ribosomes. This is Ribosome maturation factor RimM from Azorhizobium caulinodans (strain ATCC 43989 / DSM 5975 / JCM 20966 / LMG 6465 / NBRC 14845 / NCIMB 13405 / ORS 571).